The following is a 435-amino-acid chain: Adenylosuccinate synthetase (435 aa).

GTP-binding positions include 13 to 19 (GDEGKGK) and 41 to 43 (GHT). The active-site Proton acceptor is the aspartate 14. Mg(2+) contacts are provided by aspartate 14 and glycine 41. IMP is bound by residues 14 to 17 (DEGK), 39 to 42 (NAGH), threonine 130, arginine 144, glutamine 225, threonine 240, and arginine 304. The active-site Proton donor is the histidine 42. 300 to 306 (ATTGRPR) contributes to the substrate binding site. GTP-binding positions include arginine 306, 332–334 (KLD), and 419–421 (STG).

It belongs to the adenylosuccinate synthetase family. Homodimer. The cofactor is Mg(2+).

It is found in the cytoplasm. It catalyses the reaction IMP + L-aspartate + GTP = N(6)-(1,2-dicarboxyethyl)-AMP + GDP + phosphate + 2 H(+). It functions in the pathway purine metabolism; AMP biosynthesis via de novo pathway; AMP from IMP: step 1/2. Its function is as follows. Plays an important role in the de novo pathway of purine nucleotide biosynthesis. Catalyzes the first committed step in the biosynthesis of AMP from IMP. The chain is Adenylosuccinate synthetase from Nitrosospira multiformis (strain ATCC 25196 / NCIMB 11849 / C 71).